Here is a 298-residue protein sequence, read N- to C-terminus: MMPIPANPTNASIQPRSLYDAWADLAWRAMLTEVNLSPKPGLVDRLNCGAHKDMALADFHRSAEAIRHWLPRFMEYGASCTRLPPESVLAGLRPLGMACEAAMFRATAGVNTHKGSIFSLGLLCAAIGRLYQLRQPIAAETLCATAADFCRGLTTRELRQNNLLLTAGQRLYQQQGLTGARGEAEAGYPLVIRHALPHYRALLAQGRDPDLALLDTLLLLMSLNGDTNVASRGGADGLRWLQQHAAFLLHQGGIRTPDDLVYLHRFDQQCIERNLSPGGSADLLIVTWFLAQISQVNH.

This sequence belongs to the CitG/MdcB family.

It catalyses the reaction 3'-dephospho-CoA + ATP = 2'-(5''-triphospho-alpha-D-ribosyl)-3'-dephospho-CoA + adenine. This chain is Probable 2-(5''-triphosphoribosyl)-3'-dephosphocoenzyme-A synthase 2, found in Salmonella paratyphi A (strain ATCC 9150 / SARB42).